A 386-amino-acid chain; its full sequence is N-acetylneuraminate epimerase (386 aa).

The N-terminal stretch at 1–29 (MGMQMKNFKKMMTLMALCFSVAITTSGYA) is a signal peptide. Kelch repeat units lie at residues 51–95 (VIYV…VFLN), 97–149 (ELYV…VKLN), 151–186 (TMVLITGGVNEHIFDKYFIDIAAAAADESEKNKVIY), 187–232 (NYFN…VMGN), 235–284 (LMLI…LAGA), 306–355 (QNYT…SYGD), and 357–386 (VFLIGGENAKGKPVSSVTSFTMRDGNLLIK). The active-site Proton acceptor is Glu-241.

Belongs to the NanM family. In terms of assembly, homodimer.

Its subcellular location is the periplasm. The enzyme catalyses N-acetyl-alpha-neuraminate = N-acetyl-beta-neuraminate. Its function is as follows. Converts alpha-N-acetylneuranimic acid (Neu5Ac) to the beta-anomer, accelerating the equilibrium between the alpha- and beta-anomers. Probably facilitates sialidase-negative bacteria to compete successfully for limited amounts of extracellular Neu5Ac, which is likely taken up in the beta-anomer. In addition, the rapid removal of sialic acid from solution might be advantageous to the bacterium to damp down host responses. The protein is N-acetylneuraminate epimerase of Salmonella typhimurium (strain LT2 / SGSC1412 / ATCC 700720).